The chain runs to 155 residues: Small ribosomal subunit protein uS7c (155 aa).

The protein belongs to the universal ribosomal protein uS7 family. In terms of assembly, part of the 30S ribosomal subunit.

It localises to the plastid. It is found in the chloroplast. One of the primary rRNA binding proteins, it binds directly to 16S rRNA where it nucleates assembly of the head domain of the 30S subunit. The polypeptide is Small ribosomal subunit protein uS7c (rps7) (Ananas comosus (Pineapple)).